Reading from the N-terminus, the 1049-residue chain is Self-sufficient cytochrome P450 monooxygenase CYP505E4 (1049 aa).

C405 provides a ligand contact to heme. Residues 461–470 (SATALSQHNM) are compositionally biased toward polar residues. Residues 461-491 (SATALSQHNMSAGATASPGSSTHLAGDENGQ) are disordered. Low complexity predominate over residues 471–482 (SAGATASPGSST). Residues 499–640 (ISFFYGSNSG…DLEVWEETNL (142 aa)) enclose the Flavodoxin-like domain. FMN contacts are provided by residues 505 to 509 (SNSGT) and 584 to 616 (VFGC…TRLT). The region spanning 678 to 906 (RDLVEGKVTA…RPAKDAFHLP (229 aa)) is the FAD-binding FR-type domain.

In the N-terminal section; belongs to the cytochrome P450 family. FAD is required as a cofactor. Requires FMN as cofactor. The cofactor is heme.

It carries out the reaction 2 oxidized [cytochrome P450] + NADPH = 2 reduced [cytochrome P450] + NADP(+) + H(+). The enzyme catalyses an organic molecule + reduced [NADPH--hemoprotein reductase] + O2 = an alcohol + oxidized [NADPH--hemoprotein reductase] + H2O + H(+). The catalysed reaction is dodecanoate + reduced [NADPH--hemoprotein reductase] + O2 = 5-hydroxydodecanoate + oxidized [NADPH--hemoprotein reductase] + H2O + H(+). It catalyses the reaction dodecan-1-ol + reduced [NADPH--hemoprotein reductase] + O2 = 1,5-dodecanediol + oxidized [NADPH--hemoprotein reductase] + H2O + H(+). It carries out the reaction dodecanoate + reduced [NADPH--hemoprotein reductase] + O2 = 9-hydroxydodecanoate + oxidized [NADPH--hemoprotein reductase] + H2O + H(+). The enzyme catalyses dodecan-1-ol + reduced [NADPH--hemoprotein reductase] + O2 = 1,4-dodecanediol + oxidized [NADPH--hemoprotein reductase] + H2O + H(+). The catalysed reaction is dodecan-1-ol + reduced [NADPH--hemoprotein reductase] + O2 = 1,6-dodecanediol + oxidized [NADPH--hemoprotein reductase] + H2O + H(+). In terms of biological role, self-sufficient cytochrome P450 monooxygenase that catalyzes the regioselective in-chain hydroxylation of alkanes, fatty alcohols, and fatty acids at the omega-7 position. Performs hydroxylation of C10-C16 n-alkanes and C12 and C14 fatty alcohols; and thereby enables the one step biocatalytic synthesis of rare alcohols such as 5-dodecanol and 7-tetradecanol. Converts 1-dodecanol into 1,5-dodecanediol as major product with very little sub-terminally hydroxylated products with the 1,4-dodecanediol and 1,6-dodecanediol more abundant. Converts dodecanoic acid to 5-hydroxydodecanoic acid which can be further converted into delta-dodecalactone by lactonization of the 5-hydroxy acid at low pH. Also gives sub-terminal hydroxylation of dodecanoic acid with 9-hydroxydodecanoic acid being the second most abundant product. Does not show any significant activity toward tetradecanoic acid. This is Self-sufficient cytochrome P450 monooxygenase CYP505E4 from Penicillium camemberti (strain FM 013).